Here is a 507-residue protein sequence, read N- to C-terminus: Putative thymidine phosphorylase (507 aa).

The protein belongs to the thymidine/pyrimidine-nucleoside phosphorylase family. Type 2 subfamily.

The enzyme catalyses thymidine + phosphate = 2-deoxy-alpha-D-ribose 1-phosphate + thymine. In Ralstonia nicotianae (strain ATCC BAA-1114 / GMI1000) (Ralstonia solanacearum), this protein is Putative thymidine phosphorylase.